A 410-amino-acid chain; its full sequence is Glycylpeptide N-tetradecanoyltransferase (410 aa).

Residues Phe30, Trp31, Phe162, Leu163, Cys164, Val165, Ser171, Arg173, Leu174, and Ala175 each coordinate tetradecanoyl-CoA.

It belongs to the NMT family. In terms of assembly, heterodimer composed of NMT and AK2; AK2 myristoylation stabilizes the complex.

It is found in the cytoplasm. The enzyme catalyses N-terminal glycyl-[protein] + tetradecanoyl-CoA = N-tetradecanoylglycyl-[protein] + CoA + H(+). Its function is as follows. Adds a myristoyl group to the N-terminal glycine residue of certain cellular proteins. Myristoylates adenylate kinase AK2. During the asexual blood stage, may myristoylate proteins such as ARO, CDPK1 and GAP45. Probably by mediating protein myristoylation, plays a role in the assembly of the inner membrane complex during the early stages of schizogony and in the formation of rhoptries in the late stages and thus merozoite egress. This chain is Glycylpeptide N-tetradecanoyltransferase, found in Plasmodium falciparum (isolate 3D7).